We begin with the raw amino-acid sequence, 583 residues long: MLSFKSLLAAAVVASSALASASNQVALYWGQNGAGGQERLAQYCQEADVDIILLSFLNLFPDPLNVNFANQCGNTFESGLLHCSQIGADIKTCQSLGKTVLLSLGGGVGDYGFSDVASATKFADTLWNKFGAGEDPERPFDDAVVDGFDFDIEHGGATGYPELATALRGKFAKDTSKNYFLSAAPQCPYPDASLGDLLSKVPLDFAFIQFYNNYCSINGQFNYDTWSKFADSAPNKNIKLFVGVPATSNIAGYVDTSKLSSAIEEIKCDSHFAGVSLWDASGAWLNTDEKGENFVVQVKNVLNQNACVAPSSSATTQSTTTTSSAVTQSTTTTSAAITQSATTTSAAVATKSNQIVTSSSSSSSSIFYGNSTTESSTGIATGTVLPTGSNENAATTGSGSNTKLAISTVTDVQKTVITITSCSEHKCVATPVTTGVVVVTDIDTVYTTYCPLTNSQVYVSVKTVVCTEETCVPSPTSTSQKPKASTTIKGVEKGQTTSYPVVGTTEGVKKIVTTSAQTVGSSTKYVTIELTSTITPVTYPTSVASNGTNTTVPVFTFEGGAAVANSLNSVWFTVPFLLAAFAF.

Residues 1–19 (MLSFKSLLAAAVVASSALA) form the signal peptide. The GH18 domain maps to 23 to 305 (NQVALYWGQN…VQVKNVLNQN (283 aa)). E153 (proton donor) is an active-site residue. N-linked (GlcNAc...) asparagine glycans are attached at residues N370, N546, and N549. The GPI-anchor amidated glycine moiety is linked to residue G560. Positions 561–583 (AAVANSLNSVWFTVPFLLAAFAF) are cleaved as a propeptide — removed in mature form.

It belongs to the glycosyl hydrolase 18 family. Chitinase class III subfamily. In terms of processing, the GPI-anchor is attached to the protein in the endoplasmic reticulum and serves to target the protein to the cell surface. There, the glucosamine-inositol phospholipid moiety is cleaved off and the GPI-modified mannoprotein is covalently attached via its lipidless GPI glycan remnant to the 1,6-beta-glucan of the outer cell wall layer. Post-translationally, proteolytic cleavage by SAP9 and SAP10 leads to the cell wall release of CHT2 and increased chitinase activity, suggesting a direct influence of SAP9 and SAP10 on CHT2 function.

It localises to the secreted. The protein resides in the cell wall. It is found in the membrane. It catalyses the reaction Random endo-hydrolysis of N-acetyl-beta-D-glucosaminide (1-&gt;4)-beta-linkages in chitin and chitodextrins.. Chitinase involved in the remodeling of chitin in the fungal cell wall. Plays a role in cell separation. The chain is Chitinase 2 (CHT2) from Candida albicans (strain SC5314 / ATCC MYA-2876) (Yeast).